The chain runs to 350 residues: Secreted effector protein PipB2 (350 aa).

4 Pentapeptide repeat domains span residues 162-201 (ANLTAENLCDADLSGANLEGAVLFMADCEGANFKGANLSG), 202-241 (TSLGDSNFKNACLEDGIMCGATLDHANLTGANLQHASLLG), 247-286 (CNCSGANMDHTNLSGATLIRADMSGATLQGATIMAAIMED), and 287-326 (AVLTRANLRKASFISTNLDGADLAEANLNNTCFKDCTLTH).

Interacts with the host kinesin light chain (KLC), a subunit of the kinesin-1 motor complex.

It localises to the secreted. The protein resides in the host membrane. In terms of biological role, effector proteins function to alter host cell physiology and promote bacterial survival in host tissues. Involved in the reorganization of late endosome/lysosome (LE/Lys) compartments in mammalian cells. Necessary and sufficient to link kinesin-1 onto the Salmonella-containing vacuole (SCV) membrane. Required for centrifugal extension of lysosomal glycoprotein-rich membrane tubules, known as Salmonella-induced filaments (Sifs), away from the SCV and toward the cell periphery. Required for virulence, but not for intracellular survival and replication in phagocytic cells. The chain is Secreted effector protein PipB2 (pipB2) from Salmonella paratyphi A (strain ATCC 9150 / SARB42).